Consider the following 173-residue polypeptide: uncharacterized protein (173 aa).

The helical transmembrane segment at 1–21 threads the bilayer; it reads MFIVFYLILIIFIFIYFHVYI.

It to T.pallidum TP0711.

It localises to the membrane. This is an uncharacterized protein from Borreliella burgdorferi (strain ATCC 35210 / DSM 4680 / CIP 102532 / B31) (Borrelia burgdorferi).